A 284-amino-acid chain; its full sequence is Elongation factor Ts (284 aa).

Residues 80–83 (TDFV) form an involved in Mg(2+) ion dislocation from EF-Tu region.

Belongs to the EF-Ts family.

The protein localises to the cytoplasm. Its function is as follows. Associates with the EF-Tu.GDP complex and induces the exchange of GDP to GTP. It remains bound to the aminoacyl-tRNA.EF-Tu.GTP complex up to the GTP hydrolysis stage on the ribosome. The protein is Elongation factor Ts of Neisseria meningitidis serogroup A / serotype 4A (strain DSM 15465 / Z2491).